The chain runs to 176 residues: dCTP deaminase (176 aa).

Residues 99-104 and Asp115 each bind dCTP; that span reads RSTLAR. The active-site Proton donor/acceptor is the Glu125. Gln163 is a binding site for dCTP.

It belongs to the dCTP deaminase family. Homotrimer.

It carries out the reaction dCTP + H2O + H(+) = dUTP + NH4(+). The protein operates within pyrimidine metabolism; dUMP biosynthesis; dUMP from dCTP (dUTP route): step 1/2. In terms of biological role, catalyzes the deamination of dCTP to dUTP. This Pyrobaculum calidifontis (strain DSM 21063 / JCM 11548 / VA1) protein is dCTP deaminase.